The chain runs to 1131 residues: Protein TOPLESS (1131 aa).

The LisH domain maps to 4–36; the sequence is LSRELVFLILQFLDEEKFKETVHKLEQESGFFF. One can recognise a CTLH domain in the interval 34-92; sequence FFFNMKYFEDEVHNGNWDEVEKYLSGFTKVDDNRYSMKIFFEIRKQKYLEALDKHDRPK. A Phosphoserine modification is found at Ser214. The interval 286 to 305 is disordered; the sequence is TPPTNASLDYPSADSEHVSK. 15 WD repeats span residues 353–393, 415–454, 460–501, 504–545, 548–591, 595–634, 639–678, 710–756, 766–805, 833–871, 874–914, 917–956, 967–1005, 1010–1049, and 1060–1102; these read SQGS…RLVQ, EPVVSVNRVIWSPDGSLFGVAYSRHIVQLYSYHGGEDMRQ, AHVG…KRHT, GHEA…SRVD, APGR…VKRT, FHKRSLGVVQFDTTKNRYLAAGDDFSIKFWDMDAVQLLTA, GGLQASPRIRFNKEGSLLAVSGNENVIKIMANSDGLRLLH, DRSA…EPSQ, LRVAKISRLIFTNSGNAILALASNAIHLLWKWQRNERNAT, NPEEAVPCFALSKNDSYVMSASGGKISLFNMMTFKTMAT, PPPP…VKSK, GHSKRITGLAFSNVLNVLVSSGADAQLCVWNTDGWEKQRS, NSAPSDTRVQFHQDQAHFLVVHETQLAIYETTKLECMKQ, ESLAPITHATFSCDSQLVYASFMDATVCVFSSANLRLRCR, and LSNS…GKWG. Positions 1100 to 1131 are disordered; the sequence is KWGVAPPAENGSASGAPTAPSVGASASDQPQR.

Tetramer. Homodimer. Interacts (via the LisH domain) with WUS (via the C-terminal domain). Interacts with NINJA/AFPH2. Interacts with IAA1; IAA2; IAA3; IAA4; IAA6; IAA8; IAA9; IAA11; IAA13; IAA14; IAA17; IAA18; IAA26; IAA27 and IAA28. Interacts (via the LisH domain) with IAA12/BDL (via domain I). Can form a complex with IAA12 and ARF5. Interacts with AP2 (via EAR motif) and HDA19. Interacts with TIFY5A/JAZ8 (via EAR motif). Interacts with SPEAR3/TIE1. Interacts with SPL (via EAR motif). Interacts with ZAT2 and ZAT3 (via the EAR motif). Interacts with JAZ13 (via EAR motif). Interacts with GIR1 and GIR2. Expressed in embryo and in extraembryonic tissues. Expressed in inflorescences, flowers, floral meristems, developing anthers and ovules. Detected in the vascular tissues, shoot apical meristem, cotyledons and young leaves. Expressed ubiquitously in the pistils, stamens and pollens.

It localises to the nucleus. In terms of biological role, transcriptional corepressor. May repress the expression of root-promoting genes in the top half of the embryo to allow proper differentiation of the shoot pole during the transition stage of embryogenesis. Regulates the expression of PLT1 and PLT2. Negative regulator of jasmonate responses. Negative regulator of auxin responses. Negative regulator of multiple floral organ identity genes. Required for ovule development. The polypeptide is Protein TOPLESS (TPL) (Arabidopsis thaliana (Mouse-ear cress)).